The sequence spans 119 residues: Large ribosomal subunit protein bL20 (119 aa).

The protein belongs to the bacterial ribosomal protein bL20 family.

Binds directly to 23S ribosomal RNA and is necessary for the in vitro assembly process of the 50S ribosomal subunit. It is not involved in the protein synthesizing functions of that subunit. This Gluconacetobacter diazotrophicus (strain ATCC 49037 / DSM 5601 / CCUG 37298 / CIP 103539 / LMG 7603 / PAl5) protein is Large ribosomal subunit protein bL20.